A 199-amino-acid polypeptide reads, in one-letter code: Translation initiation factor IF-3 (199 aa).

This sequence belongs to the IF-3 family. As to quaternary structure, monomer.

It localises to the cytoplasm. In terms of biological role, IF-3 binds to the 30S ribosomal subunit and shifts the equilibrium between 70S ribosomes and their 50S and 30S subunits in favor of the free subunits, thus enhancing the availability of 30S subunits on which protein synthesis initiation begins. The polypeptide is Translation initiation factor IF-3 (Mycoplasmopsis pulmonis (strain UAB CTIP) (Mycoplasma pulmonis)).